A 72-amino-acid chain; its full sequence is Translation initiation factor IF-1 (72 aa).

Residues 1–72 enclose the S1-like domain; sequence MAKDDVIEVE…TRGRIVWRGK (72 aa).

Belongs to the IF-1 family. As to quaternary structure, component of the 30S ribosomal translation pre-initiation complex which assembles on the 30S ribosome in the order IF-2 and IF-3, IF-1 and N-formylmethionyl-tRNA(fMet); mRNA recruitment can occur at any time during PIC assembly.

Its subcellular location is the cytoplasm. Its function is as follows. One of the essential components for the initiation of protein synthesis. Stabilizes the binding of IF-2 and IF-3 on the 30S subunit to which N-formylmethionyl-tRNA(fMet) subsequently binds. Helps modulate mRNA selection, yielding the 30S pre-initiation complex (PIC). Upon addition of the 50S ribosomal subunit IF-1, IF-2 and IF-3 are released leaving the mature 70S translation initiation complex. In Caldanaerobacter subterraneus subsp. tengcongensis (strain DSM 15242 / JCM 11007 / NBRC 100824 / MB4) (Thermoanaerobacter tengcongensis), this protein is Translation initiation factor IF-1.